Consider the following 565-residue polypeptide: NAD-dependent malic enzyme (565 aa).

Tyr104 serves as the catalytic Proton donor. Arg157 is an NAD(+) binding site. Lys175 serves as the catalytic Proton acceptor. Residues Glu246, Asp247, and Asp270 each coordinate a divalent metal cation. 2 residues coordinate NAD(+): Asp270 and Asn418.

The protein belongs to the malic enzymes family. As to quaternary structure, homotetramer. Mg(2+) serves as cofactor. Mn(2+) is required as a cofactor.

It carries out the reaction (S)-malate + NAD(+) = pyruvate + CO2 + NADH. The catalysed reaction is oxaloacetate + H(+) = pyruvate + CO2. The protein is NAD-dependent malic enzyme of Escherichia coli O157:H7.